The sequence spans 298 residues: Proton-activated chloride channel (298 aa).

Residues 1 to 12 lie on the Cytoplasmic side of the membrane; it reads MPIGFNKACLKN. Residues 13–33 form a helical membrane-spanning segment; the sequence is VFTVILVLIYLALTAVAVFLA. Topologically, residues 34–245 are extracellular; it reads YQTISDFMDK…RDPFIQQVKD (212 aa). A helical transmembrane segment spans residues 246–266; that stretch reads IVTANPWNTIAILCGVFMALF. Over 267–298 the chain is Cytoplasmic; the sequence is KAADFAKLSIKWMIRIRKRHIRAKMREMNQIS.

Belongs to the proton-activated chloride channel family.

It is found in the cell membrane. The catalysed reaction is chloride(in) = chloride(out). In terms of biological role, chloride channel gated by pH that facilitates the entry of chloride ions into cells upon exposure to extracellular acidic pH. Displays channel activity with distinct kinetic properties compared to the human ortholog channel. The polypeptide is Proton-activated chloride channel (Danio rerio (Zebrafish)).